A 145-amino-acid chain; its full sequence is Large ribosomal subunit protein uL15 (145 aa).

The interval 1-43 (MRLNTIKPGAGSKSAAKRVGRGIGSGLGKTCGRGHKGQKSRAG) is disordered. Residues 21 to 31 (RGIGSGLGKTC) show a composition bias toward gly residues.

Belongs to the universal ribosomal protein uL15 family. Part of the 50S ribosomal subunit.

Binds to the 23S rRNA. This chain is Large ribosomal subunit protein uL15, found in Aromatoleum aromaticum (strain DSM 19018 / LMG 30748 / EbN1) (Azoarcus sp. (strain EbN1)).